The following is a 283-amino-acid chain: 32 kDa beta-galactoside-binding lectin (283 aa).

Galectin domains are found at residues 17-148 (YRSL…VHWG) and 156-283 (YESG…IQIQ). Residue 217–223 (WGNEERE) participates in a beta-D-galactoside binding.

(Microbial infection) Interacts (via domain galectin 2) with goat TMEM147. Interacts (via domain galectin 1) with goat TMEM63A.

It is found in the membrane. In terms of biological role, binds galactose. Exerts immunomodulatory effects on host peripheral blood mononuclear cells to down-regulate host immune response. Hemagglutinates human, dog, rabbit, chicken and mouse erythrocytes but does not hemagglutinate the erythrocytes of goat, its natural host. The polypeptide is 32 kDa beta-galactoside-binding lectin (GAL-1) (Haemonchus contortus (Barber pole worm)).